Here is a 75-residue protein sequence, read N- to C-terminus: Large ribosomal subunit protein bL31 (75 aa).

This sequence belongs to the bacterial ribosomal protein bL31 family. Type A subfamily. In terms of assembly, part of the 50S ribosomal subunit.

Its function is as follows. Binds the 23S rRNA. The protein is Large ribosomal subunit protein bL31 of Bradyrhizobium sp. (strain BTAi1 / ATCC BAA-1182).